The chain runs to 537 residues: Carbamoyl phosphate synthase large chain, C-terminal section (537 aa).

The carbamoyl phosphate synthetic domain stretch occupies residues 1-395; it reads MSKKVVILGS…AYYKAQLSAG (395 aa). The ATP-grasp domain maps to 122–313; that stretch reads RELIIELGLK…LAKIATKVAI (192 aa). Residues Arg-158, Lys-197, Leu-199, Glu-204, Gly-229, Val-230, His-231, Ser-232, Gln-272, and Glu-284 each coordinate ATP. Mg(2+) contacts are provided by Gln-272, Glu-284, and Asn-286. Mn(2+) contacts are provided by Gln-272, Glu-284, and Asn-286. The 142-residue stretch at 396–537 folds into the MGS-like domain; it reads YRLPEKGNLF…VHSLQEIYNI (142 aa). The interval 396 to 537 is allosteric domain; that stretch reads YRLPEKGNLF…VHSLQEIYNI (142 aa).

This sequence belongs to the CarB family. As to quaternary structure, composed of two chains; the small (or glutamine) chain promotes the hydrolysis of glutamine to ammonia, which is used by the large (or ammonia) chain to synthesize carbamoyl phosphate. Tetramer of heterodimers (alpha,beta)4. Mg(2+) serves as cofactor. Requires Mn(2+) as cofactor.

It carries out the reaction hydrogencarbonate + L-glutamine + 2 ATP + H2O = carbamoyl phosphate + L-glutamate + 2 ADP + phosphate + 2 H(+). The enzyme catalyses hydrogencarbonate + NH4(+) + 2 ATP = carbamoyl phosphate + 2 ADP + phosphate + 2 H(+). The protein operates within amino-acid biosynthesis; L-arginine biosynthesis; carbamoyl phosphate from bicarbonate: step 1/1. It participates in pyrimidine metabolism; UMP biosynthesis via de novo pathway; (S)-dihydroorotate from bicarbonate: step 1/3. Functionally, large subunit of the glutamine-dependent carbamoyl phosphate synthetase (CPSase). CPSase catalyzes the formation of carbamoyl phosphate from the ammonia moiety of glutamine, carbonate, and phosphate donated by ATP, constituting the first step of 2 biosynthetic pathways, one leading to arginine and/or urea and the other to pyrimidine nucleotides. The large subunit (synthetase) binds the substrates ammonia (free or transferred from glutamine from the small subunit), hydrogencarbonate and ATP and carries out an ATP-coupled ligase reaction, activating hydrogencarbonate by forming carboxy phosphate which reacts with ammonia to form carbamoyl phosphate. In Aquifex aeolicus (strain VF5), this protein is Carbamoyl phosphate synthase large chain, C-terminal section (carB2).